The primary structure comprises 102 residues: Large ribosomal subunit protein bL21 (102 aa).

This sequence belongs to the bacterial ribosomal protein bL21 family. In terms of assembly, part of the 50S ribosomal subunit. Contacts protein L20.

Functionally, this protein binds to 23S rRNA in the presence of protein L20. The chain is Large ribosomal subunit protein bL21 from Ehrlichia ruminantium (strain Gardel).